The following is a 433-amino-acid chain: N-lysine methyltransferase SMYD2 (433 aa).

The SET domain occupies 7–241; it reads GGLERFCSPG…PGEEVFTSYI (235 aa). 17–19 serves as a coordination point for S-adenosyl-L-methionine; the sequence is KGR. Positions 52, 55, 65, 68, 74, 78, 86, and 90 each coordinate Zn(2+). The MYND-type zinc finger occupies 52–90; it reads CEFCFARKEGLSKCGRCKQAFYCNVECQKEDWPMHKLEC. Residues histidine 137, 206–207, and 258–260 contribute to the S-adenosyl-L-methionine site; these read NH and YFF.

The protein belongs to the class V-like SAM-binding methyltransferase superfamily. In terms of assembly, interacts with RNA polymerase II and HELZ. Interacts with SIN3A and HDAC1. Interacts (via MYND-type zinc finger) with EPB41L3. Interacts (via SET domain) with p53/TP53. Interacts with RB1 and HSP90AA1.

It is found in the cytoplasm. The protein localises to the cytosol. The protein resides in the nucleus. It catalyses the reaction L-lysyl(4)-[histone H3] + 3 S-adenosyl-L-methionine = N(6),N(6),N(6)-trimethyl-L-lysyl(4)-[histone H3] + 3 S-adenosyl-L-homocysteine + 3 H(+). It carries out the reaction L-lysyl-[protein] + S-adenosyl-L-methionine = N(6)-methyl-L-lysyl-[protein] + S-adenosyl-L-homocysteine + H(+). In terms of biological role, protein-lysine N-methyltransferase that methylates both histones and non-histone proteins, including p53/TP53 and RB1. Specifically trimethylates histone H3 'Lys-4' (H3K4me3) in vivo. The activity requires interaction with HSP90alpha. Shows even higher methyltransferase activity on p53/TP53. Monomethylates 'Lys-370' of p53/TP53, leading to decreased DNA-binding activity and subsequent transcriptional regulation activity of p53/TP53. Monomethylates RB1 at 'Lys-860'. In Sus scrofa (Pig), this protein is N-lysine methyltransferase SMYD2 (SMYD2).